A 159-amino-acid chain; its full sequence is ATP synthase subunit b (159 aa).

A helical transmembrane segment spans residues 7 to 27; sequence DFIWTLINFFVLLFILKILLY.

It belongs to the ATPase B chain family. As to quaternary structure, F-type ATPases have 2 components, F(1) - the catalytic core - and F(0) - the membrane proton channel. F(1) has five subunits: alpha(3), beta(3), gamma(1), delta(1), epsilon(1). F(0) has three main subunits: a(1), b(2) and c(10-14). The alpha and beta chains form an alternating ring which encloses part of the gamma chain. F(1) is attached to F(0) by a central stalk formed by the gamma and epsilon chains, while a peripheral stalk is formed by the delta and b chains.

It localises to the cell membrane. In terms of biological role, f(1)F(0) ATP synthase produces ATP from ADP in the presence of a proton or sodium gradient. F-type ATPases consist of two structural domains, F(1) containing the extramembraneous catalytic core and F(0) containing the membrane proton channel, linked together by a central stalk and a peripheral stalk. During catalysis, ATP synthesis in the catalytic domain of F(1) is coupled via a rotary mechanism of the central stalk subunits to proton translocation. Functionally, component of the F(0) channel, it forms part of the peripheral stalk, linking F(1) to F(0). The chain is ATP synthase subunit b from Carboxydothermus hydrogenoformans (strain ATCC BAA-161 / DSM 6008 / Z-2901).